Consider the following 441-residue polypeptide: Protein eva-1 homolog C (441 aa).

A disordered region spans residues 1-23; that stretch reads MLLPGRARQPPTPQPVQHPGLRR. The signal sequence occupies residues 1–48; the sequence is MLLPGRARQPPTPQPVQHPGLRRQVEPPGQLLRLFYCTVLVCSKEISA. Residues 49–322 are Extracellular-facing; sequence LTDFSGYLTK…AYIRAHPERA (274 aa). N-linked (GlcNAc...) asparagine glycosylation occurs at N62. The 93-residue stretch at 67–159 folds into the SUEL-type lectin 1 domain; that stretch reads ACDGDYLNLQ…KYLLVSFKCQ (93 aa). An N-linked (GlcNAc...) asparagine glycan is attached at N165. The SUEL-type lectin 2 domain occupies 168 to 260; that stretch reads VCEDQELKLH…KYLTVTYACV (93 aa). The helical transmembrane segment at 323-343 threads the bilayer; that stretch reads ALLFVSSVCIGLALTLCALVI. Over 344-441 the chain is Cytoplasmic; sequence RESCAKDFRD…SLPRNMGQFY (98 aa). Residues 362–390 are disordered; it reads VPGSDKVEEDSEDEEEEEDPSESDFPGEL. Residues 368 to 383 are compositionally biased toward acidic residues; sequence VEEDSEDEEEEEDPSE.

This sequence belongs to the EVA1 family. As to expression, ubiquitous.

The protein resides in the membrane. Functionally, binds heparin. In Homo sapiens (Human), this protein is Protein eva-1 homolog C (EVA1C).